Reading from the N-terminus, the 350-residue chain is 3-isopropylmalate dehydrogenase (350 aa).

76–87 lines the NAD(+) pocket; the sequence is GPKWDNAPKRPE. Arg-94, Arg-104, Arg-132, and Asp-217 together coordinate substrate. Residues Asp-217, Asp-241, and Asp-245 each contribute to the Mg(2+) site. 275–287 is a binding site for NAD(+); the sequence is GSAPDIANQNIAN.

It belongs to the isocitrate and isopropylmalate dehydrogenases family. LeuB type 1 subfamily. As to quaternary structure, homodimer. It depends on Mg(2+) as a cofactor. Mn(2+) is required as a cofactor.

It localises to the cytoplasm. It carries out the reaction (2R,3S)-3-isopropylmalate + NAD(+) = 4-methyl-2-oxopentanoate + CO2 + NADH. It functions in the pathway amino-acid biosynthesis; L-leucine biosynthesis; L-leucine from 3-methyl-2-oxobutanoate: step 3/4. Its function is as follows. Catalyzes the oxidation of 3-carboxy-2-hydroxy-4-methylpentanoate (3-isopropylmalate) to 3-carboxy-4-methyl-2-oxopentanoate. The product decarboxylates to 4-methyl-2 oxopentanoate. The polypeptide is 3-isopropylmalate dehydrogenase (Listeria innocua serovar 6a (strain ATCC BAA-680 / CLIP 11262)).